The following is a 220-amino-acid chain: CRIB domain-containing protein RIC3 (220 aa).

Residues 28 to 41 (IGFPTDVKHVAHIG) form the CRIB domain. The disordered stretch occupies residues 39-220 (HIGSDGPATN…CNDNNISDKE (182 aa)). Residues 61 to 77 (NENGQVVSRADANNNQI) are compositionally biased toward polar residues. A compositionally biased stretch (low complexity) spans 108-121 (NGSPPRRNSSASAS). Basic residues-rich tracts occupy residues 127–136 (NTRRHHRSRH) and 172–184 (HSRKSTSRHRKPK). Positions 209-220 (DTCNDNNISDKE) are enriched in polar residues.

Interacts with ARAC11/ROP1. As to expression, expressed in flowers and pollen.

It is found in the cytoplasm. In terms of biological role, functions as a downstream effector of Rho-related GTP binding proteins of the 'Rho of Plants' (ROPs) family. Participates in the propagation of ROP GTPase signals in specific cellular responses. Functions as a downstream effector of ARAC11/ROP1 to activate calcium signaling that leads to F-actin disassembly associated with exocytosis in the tip of the growing pollen tube. Counteracts the ARAC11/ROP1-RIC4 pathway, which promotes apical F-actin assembly associated with vesicle accumulation, to control actin dynamics and pollen tube apical growth. The chain is CRIB domain-containing protein RIC3 (RIC3) from Arabidopsis thaliana (Mouse-ear cress).